Reading from the N-terminus, the 72-residue chain is Large ribosomal subunit protein bL31 (72 aa).

Cysteine 16, cysteine 18, cysteine 38, and cysteine 41 together coordinate Zn(2+).

Belongs to the bacterial ribosomal protein bL31 family. Type A subfamily. As to quaternary structure, part of the 50S ribosomal subunit. Zn(2+) serves as cofactor.

In terms of biological role, binds the 23S rRNA. This Aliivibrio salmonicida (strain LFI1238) (Vibrio salmonicida (strain LFI1238)) protein is Large ribosomal subunit protein bL31.